A 479-amino-acid polypeptide reads, in one-letter code: Small ribosomal subunit protein bS1 (479 aa).

S1 motif domains follow at residues 36-105, 123-188, 209-277, and 294-363; these read GDIV…LSKK, DEAV…LSRR, GAIR…LSLK, and GQIV…LSLK. The disordered stretch occupies residues 429 to 466; sequence TAQMEKFAAAEAEAANAPVSNGSSRSEESSGGTLASDA. Residues 437–460 show a composition bias toward low complexity; the sequence is AAEAEAANAPVSNGSSRSEESSGG.

Belongs to the bacterial ribosomal protein bS1 family. Binds uncharacterized protein MSMEG_2731/MSMEI_2664.

In terms of biological role, binds mRNA, facilitating recognition of most mRNAs by the 30S ribosomal subunit during translation initiation. Plays a role in trans-translation; binds tmRNA (the product of the ssrA gene). Binds very poorly to pyrazinoic acid (POA), the active form of the prodrug pyrazinamide (PZA); POA does not disrupt trans-translation in this organism. M.smegmatis is resistant to the antibiotic PZA. In trans-translation Ala-aminoacylated transfer-messenger RNA (tmRNA, product of the ssrA gene; the 2 termini fold to resemble tRNA(Ala) while it encodes a short internal open reading frame (the tag peptide)) acts like a tRNA, entering the A-site of the ribosome and displacing the stalled mRNA (which is subsequently degraded). The ribosome then switches to translate the ORF on the tmRNA, the nascent peptide is terminated with the 'tag peptide' encoded by the tmRNA and thus targeted for degradation. This is Small ribosomal subunit protein bS1 (rpsA) from Mycolicibacterium smegmatis (strain ATCC 700084 / mc(2)155) (Mycobacterium smegmatis).